The chain runs to 245 residues: 1-(5-phosphoribosyl)-5-[(5-phosphoribosylamino)methylideneamino] imidazole-4-carboxamide isomerase (245 aa).

D8 serves as the catalytic Proton acceptor. D129 functions as the Proton donor in the catalytic mechanism.

Belongs to the HisA/HisF family.

It is found in the cytoplasm. The catalysed reaction is 1-(5-phospho-beta-D-ribosyl)-5-[(5-phospho-beta-D-ribosylamino)methylideneamino]imidazole-4-carboxamide = 5-[(5-phospho-1-deoxy-D-ribulos-1-ylimino)methylamino]-1-(5-phospho-beta-D-ribosyl)imidazole-4-carboxamide. Its pathway is amino-acid biosynthesis; L-histidine biosynthesis; L-histidine from 5-phospho-alpha-D-ribose 1-diphosphate: step 4/9. The polypeptide is 1-(5-phosphoribosyl)-5-[(5-phosphoribosylamino)methylideneamino] imidazole-4-carboxamide isomerase (Heliobacterium modesticaldum (strain ATCC 51547 / Ice1)).